The primary structure comprises 366 residues: Alanine racemase (366 aa).

Residue Lys-40 is the Proton acceptor; specific for D-alanine of the active site. An N6-(pyridoxal phosphate)lysine modification is found at Lys-40. Arg-136 contributes to the substrate binding site. Tyr-263 functions as the Proton acceptor; specific for L-alanine in the catalytic mechanism. Met-310 contacts substrate.

Belongs to the alanine racemase family. Requires pyridoxal 5'-phosphate as cofactor.

The enzyme catalyses L-alanine = D-alanine. The protein operates within amino-acid biosynthesis; D-alanine biosynthesis; D-alanine from L-alanine: step 1/1. Its function is as follows. Catalyzes the interconversion of L-alanine and D-alanine. May also act on other amino acids. The protein is Alanine racemase (alr) of Streptococcus equi subsp. equi (strain 4047).